Consider the following 185-residue polypeptide: Large ribosomal subunit protein uL5 (185 aa).

Belongs to the universal ribosomal protein uL5 family. As to quaternary structure, part of the 50S ribosomal subunit; part of the 5S rRNA/L5/L18/L25 subcomplex. Contacts the 5S rRNA and the P site tRNA. Forms a bridge to the 30S subunit in the 70S ribosome.

In terms of biological role, this is one of the proteins that bind and probably mediate the attachment of the 5S RNA into the large ribosomal subunit, where it forms part of the central protuberance. In the 70S ribosome it contacts protein S13 of the 30S subunit (bridge B1b), connecting the 2 subunits; this bridge is implicated in subunit movement. Contacts the P site tRNA; the 5S rRNA and some of its associated proteins might help stabilize positioning of ribosome-bound tRNAs. The chain is Large ribosomal subunit protein uL5 from Afipia carboxidovorans (strain ATCC 49405 / DSM 1227 / KCTC 32145 / OM5) (Oligotropha carboxidovorans).